The sequence spans 475 residues: MTTLPPLPMTRPKLTALARQKLPCSSRKIPRSQLIKEKDDIDHYLEVNFKGLSKEEVAAYRNSYKKNICVDMLRDGYHKSFTELFALMERWDALREAARVRSLFWLQKPLEEQPDKLDYLYHYLTRAEDAERKESFEDVHNNLYALACYFNNSEDKWVRNHFYERCFKIAQLIKIDCGKKEAEAHMHMGLLYEEDGQLLEAAEHYEAFHQLTQGRIWKDETGRSLNLLACESLLRTYRLLSDKMLENKEYKQAIKILIKASEIAKEGSDKKMEAEASYYLGLAHLAAEEYETALTVLDTYCKISTDLDDDLSLGRGYEAIAKVLQSQGEMTEAIKYLKKFVKIARNNFQSLDLVRASTMLGDIYNEKGYYNKASECFQQAFDTTVELMSMPLMDETKVHYGIAKAHQMMLTVNNYIESADLTSLNYLLSWKESRGNIEPDPVTEEFRGSTVEAVSQNSERLEELSRFPGDQKNET.

7 TPR repeats span residues 92-131, 136-173, 182-215, 234-267, 274-307, 314-347, and 354-387; these read DALR…EDAE, FEDV…AQLI, AEAH…TQGR, LRTY…AKEG, AEAS…STDL, GRGY…ARNN, and VRAS…TVEL. Positions 437–475 are disordered; it reads IEPDPVTEEFRGSTVEAVSQNSERLEELSRFPGDQKNET. Positions 459–475 are enriched in basic and acidic residues; sequence ERLEELSRFPGDQKNET.

As to expression, expressed in spermatozoa (at protein level).

Its subcellular location is the cytoplasm. The protein resides in the cytoskeleton. The protein localises to the flagellum axoneme. Functionally, axonemal protein which is implicated in axonemal and/or peri-axonemal structure assembly and regulates flagellum assembly and beating and therefore sperm motility. This Homo sapiens (Human) protein is Tetratricopeptide repeat protein 29 (TTC29).